We begin with the raw amino-acid sequence, 123 residues long: MRLHLLVLSVIVVSLLVSDNAHANSHDDSKTRALRETPINGLVTNQLAVSRNLTPAKFITNSEERHSSEKKSRRLQIYFHSPYYGIHPVDYHYVGSYESGVTTICSIVLFVMVFGCLYKIFSQ.

The signal sequence occupies residues 1–23; it reads MRLHLLVLSVIVVSLLVSDNAHA. Residues 32–65 carry the RxLR-dEER motif; that stretch reads RALRETPINGLVTNQLAVSRNLTPAKFITNSEER. Residues 101–121 traverse the membrane as a helical segment; the sequence is VTTICSIVLFVMVFGCLYKIF.

It belongs to the RxLR effector family.

The protein resides in the secreted. The protein localises to the host endoplasmic reticulum membrane. Secreted effector that does not suppress pattern-triggered immunity (PTI) in plant host. The sequence is that of Secreted RxLR effector protein RXLR-C21 from Plasmopara halstedii (Downy mildew of sunflower).